The following is a 322-amino-acid chain: Ornithine carbamoyltransferase (322 aa).

Carbamoyl phosphate contacts are provided by residues 67-70 (STRT), glutamine 94, arginine 118, and 145-148 (HPCQ). Residues asparagine 176, aspartate 240, and 244-245 (SM) contribute to the L-ornithine site. Carbamoyl phosphate contacts are provided by residues 280-281 (CL) and arginine 308.

The protein belongs to the aspartate/ornithine carbamoyltransferase superfamily. OTCase family.

The protein resides in the cytoplasm. The enzyme catalyses carbamoyl phosphate + L-ornithine = L-citrulline + phosphate + H(+). Its pathway is amino-acid biosynthesis; L-arginine biosynthesis; L-arginine from L-ornithine and carbamoyl phosphate: step 1/3. Reversibly catalyzes the transfer of the carbamoyl group from carbamoyl phosphate (CP) to the N(epsilon) atom of ornithine (ORN) to produce L-citrulline. The chain is Ornithine carbamoyltransferase from Oceanobacillus iheyensis (strain DSM 14371 / CIP 107618 / JCM 11309 / KCTC 3954 / HTE831).